Here is a 92-residue protein sequence, read N- to C-terminus: Small ribosomal subunit protein bS18B (92 aa).

This sequence belongs to the bacterial ribosomal protein bS18 family. Part of the 30S ribosomal subunit. Forms a tight heterodimer with protein bS6.

In terms of biological role, binds as a heterodimer with protein bS6 to the central domain of the 16S rRNA, where it helps stabilize the platform of the 30S subunit. The protein is Small ribosomal subunit protein bS18B of Cupriavidus pinatubonensis (strain JMP 134 / LMG 1197) (Cupriavidus necator (strain JMP 134)).